The following is a 253-amino-acid chain: Malonyl-[acyl-carrier protein] O-methyltransferase (253 aa).

It belongs to the methyltransferase superfamily.

The catalysed reaction is malonyl-[ACP] + S-adenosyl-L-methionine = malonyl-[ACP] methyl ester + S-adenosyl-L-homocysteine. Its pathway is cofactor biosynthesis; biotin biosynthesis. Its function is as follows. Converts the free carboxyl group of a malonyl-thioester to its methyl ester by transfer of a methyl group from S-adenosyl-L-methionine (SAM). It allows to synthesize pimeloyl-ACP via the fatty acid synthetic pathway. This Pectobacterium atrosepticum (strain SCRI 1043 / ATCC BAA-672) (Erwinia carotovora subsp. atroseptica) protein is Malonyl-[acyl-carrier protein] O-methyltransferase.